The chain runs to 70 residues: Brevinin-1MT2 (70 aa).

Residues 1–22 (MFTLKKSMLLLFFLGTINLSLC) form the signal peptide. The propeptide occupies 23–44 (EQERNADEEERRDDDEMDVEVE). Cys-64 and Cys-70 are joined by a disulfide.

This sequence belongs to the frog skin active peptide (FSAP) family. Brevinin subfamily. Expressed by the skin glands.

The protein resides in the secreted. Functionally, antimicrobial peptide with activity against a variety of Gram-negative and Gram-positive bacteria and against fungi. Shows strong hemolytic activity against human erythrocytes. This Amolops mantzorum (Sichuan torrent frog) protein is Brevinin-1MT2.